A 90-amino-acid polypeptide reads, in one-letter code: Small ribosomal subunit protein uS15 (90 aa).

Belongs to the universal ribosomal protein uS15 family. In terms of assembly, part of the 30S ribosomal subunit. Forms a bridge to the 50S subunit in the 70S ribosome, contacting the 23S rRNA.

One of the primary rRNA binding proteins, it binds directly to 16S rRNA where it helps nucleate assembly of the platform of the 30S subunit by binding and bridging several RNA helices of the 16S rRNA. Its function is as follows. Forms an intersubunit bridge (bridge B4) with the 23S rRNA of the 50S subunit in the ribosome. This is Small ribosomal subunit protein uS15 from Thermotoga maritima (strain ATCC 43589 / DSM 3109 / JCM 10099 / NBRC 100826 / MSB8).